A 213-amino-acid polypeptide reads, in one-letter code: Dimethylamine corrinoid protein 3 (213 aa).

In terms of domain architecture, B12-binding N-terminal spans 1-91 (MADIEGLLHE…DLPAGAEKKL (91 aa)). One can recognise a B12-binding domain in the interval 92 to 213 (GVIVNGTVEG…AVAKAKELLL (122 aa)). Histidine 104 serves as a coordination point for methylcob(III)alamin.

It belongs to the methylamine corrinoid protein family.

The protein operates within one-carbon metabolism; methanogenesis from dimethylamine. Acts as a methyl group carrier between MtbB and MtbA. The polypeptide is Dimethylamine corrinoid protein 3 (mtbC3) (Methanosarcina acetivorans (strain ATCC 35395 / DSM 2834 / JCM 12185 / C2A)).